The chain runs to 242 residues: Outer membrane protein class 4 (242 aa).

An N-terminal signal peptide occupies residues 1–22 (MTKQLKLSALFVALLASGTAVA). Tandem repeats lie at residues 69–70 (AP), 71–72 (EP), 73–74 (EP), 75–76 (EP), 77–78 (EP), 79–80 (AP), and 81–82 (AP). Positions 69–82 (APEPEPEPEPAPAP) are 7 X 2 AA tandem repeats of X-P. The OmpA-like domain occupies 92 to 229 (YVDETISLSA…RVDVKIRSIV (138 aa)). C191 and C214 are disulfide-bonded.

It belongs to the outer membrane OOP (TC 1.B.6) superfamily.

The protein resides in the cell outer membrane. This is Outer membrane protein class 4 (rmpM) from Neisseria meningitidis serogroup A / serotype 4A (strain DSM 15465 / Z2491).